The primary structure comprises 273 residues: Dermonecrotic toxin LspiSicTox-betaIE1i (273 aa).

Glu25 and Asp27 together coordinate Mg(2+). His41 functions as the Nucleophile in the catalytic mechanism. Residues Cys45 and Cys51 are joined by a disulfide bond. Asp85 provides a ligand contact to Mg(2+).

It belongs to the arthropod phospholipase D family. Class I subfamily. The cofactor is Mg(2+). In terms of tissue distribution, expressed by the venom gland.

Its subcellular location is the secreted. The enzyme catalyses an N-(acyl)-sphingosylphosphocholine = an N-(acyl)-sphingosyl-1,3-cyclic phosphate + choline. The catalysed reaction is an N-(acyl)-sphingosylphosphoethanolamine = an N-(acyl)-sphingosyl-1,3-cyclic phosphate + ethanolamine. It catalyses the reaction a 1-acyl-sn-glycero-3-phosphocholine = a 1-acyl-sn-glycero-2,3-cyclic phosphate + choline. It carries out the reaction a 1-acyl-sn-glycero-3-phosphoethanolamine = a 1-acyl-sn-glycero-2,3-cyclic phosphate + ethanolamine. Functionally, dermonecrotic toxins cleave the phosphodiester linkage between the phosphate and headgroup of certain phospholipids (sphingolipid and lysolipid substrates), forming an alcohol (often choline) and a cyclic phosphate. This toxin acts on sphingomyelin (SM). It may also act on ceramide phosphoethanolamine (CPE), lysophosphatidylcholine (LPC) and lysophosphatidylethanolamine (LPE), but not on lysophosphatidylserine (LPS), and lysophosphatidylglycerol (LPG). It acts by transphosphatidylation, releasing exclusively cyclic phosphate products as second products. Induces dermonecrosis, hemolysis, increased vascular permeability, edema, inflammatory response, and platelet aggregation. This chain is Dermonecrotic toxin LspiSicTox-betaIE1i, found in Loxosceles spinulosa (Recluse spider).